Here is a 219-residue protein sequence, read N- to C-terminus: Mediator of RNA polymerase II transcription subunit 20 (219 aa).

It belongs to the Mediator complex subunit 20 family. Component of the Mediator complex.

It is found in the nucleus. Functionally, component of the Mediator complex, a coactivator involved in the regulated transcription of nearly all RNA polymerase II-dependent genes. Mediator functions as a bridge to convey information from gene-specific regulatory proteins to the basal RNA polymerase II transcription machinery. Mediator is recruited to promoters by direct interactions with regulatory proteins and serves as a scaffold for the assembly of a functional preinitiation complex with RNA polymerase II and the general transcription factors. This Aedes aegypti (Yellowfever mosquito) protein is Mediator of RNA polymerase II transcription subunit 20 (MED20).